We begin with the raw amino-acid sequence, 2694 residues long: Teneurin-3 (2694 aa).

Disordered stretches follow at residues 1–45, 106–132, and 161–198; these read MDVK…SSSE, PSSL…DNQS, and TQPA…PSVT. Positions 1 to 306 constitute a Teneurin N-terminal domain; that stretch reads MDVKERRPYC…KSSKYCSWRC (306 aa). The Cytoplasmic portion of the chain corresponds to 1 to 312; the sequence is MDVKERRPYC…SWRCTALSAM (312 aa). The segment covering 163–184 has biased composition (polar residues); the sequence is PAPSHSCNEQPSNQHQQGQSTL. The chain crosses the membrane as a helical span at residues 313-333; that stretch reads AVSILLSVLLCYCIAMHLFGL. Residues 334–2694 lie on the Extracellular side of the membrane; the sequence is NWQLQETEGY…FLRQSEIGKR (2361 aa). N-linked (GlcNAc...) asparagine glycans are attached at residues asparagine 374 and asparagine 413. EGF-like domains lie at 508-539, 540-570, 572-604, 605-636, 638-671, 672-703, 704-733, and 734-768; these read TLTE…PDCS, RAAC…TECD, PSNQ…DNCE, EVDC…NNCE, LKTM…PDCS, IEVC…VCDL, KACH…EHCT, and VEGC…AGCD. 22 disulfides stabilise this stretch: cysteine 512/cysteine 522, cysteine 516/cysteine 527, cysteine 529/cysteine 538, cysteine 547/cysteine 558, cysteine 560/cysteine 569, cysteine 576/cysteine 587, cysteine 581/cysteine 592, cysteine 594/cysteine 603, cysteine 608/cysteine 619, cysteine 613/cysteine 624, cysteine 626/cysteine 635, cysteine 646/cysteine 659, cysteine 661/cysteine 670, cysteine 675/cysteine 685, cysteine 679/cysteine 690, cysteine 692/cysteine 701, cysteine 706/cysteine 716, cysteine 710/cysteine 721, cysteine 723/cysteine 732, cysteine 737/cysteine 747, cysteine 741/cysteine 756, and cysteine 758/cysteine 767. The N-linked (GlcNAc...) asparagine glycan is linked to asparagine 664. Asparagine 854, asparagine 877, and asparagine 1048 each carry an N-linked (GlcNAc...) asparagine glycan. 5 NHL repeats span residues 1166–1192, 1194–1238, 1264–1308, 1325–1365, and 1452–1495; these read LLAP…RRIF, SGNV…PKAL, ARCG…NGII, CDNS…ITEN, and CYQT…IRHN. Asparagine 1196 carries N-linked (GlcNAc...) asparagine glycosylation. The stretch at 1505 to 1524 is one YD 1 repeat; it reads FEVASPASQELYVFDSNGTH. Asparagine 1521 and asparagine 1538 each carry an N-linked (GlcNAc...) asparagine glycan. 3 YD repeats span residues 1541 to 1561, 1604 to 1623, and 1624 to 1646; these read YSNE…LRVR, YHGN…WTTF, and YDYD…TSLI. Residues asparagine 1634, asparagine 1671, asparagine 1729, and asparagine 1814 are each glycosylated (N-linked (GlcNAc...) asparagine). YD repeat units follow at residues 1817-1836, 1858-1876, 1877-1897, 1904-1921, 1922-1943, 1944-1961, 1964-1984, 1987-2007, 2015-2034, 2040-2057, 2058-2084, 2086-2099, 2100-2123, 2126-2146, 2147-2167, 2169-2189, 2201-2221, and 2223-2243; these read YSST…ERVE, YLDK…YIFD, YDLQ…HTMQ, YYRN…VTVD, YSED…VLYK, YRRQ…TRVS, YDET…FICS, YRQI…DGMV, YDNS…TPLP, FDDI…GVIY, YDIN…IKEI, YEIF…ITIQ, YDNM…TKYG, YDVD…WRYN, YDLN…LTPL, YDLR…DEDG, YNSK…TIQY, and YDGL…LQFF. Residue asparagine 1915 is glycosylated (N-linked (GlcNAc...) asparagine). Asparagine 2118 carries an N-linked (GlcNAc...) asparagine glycan. Asparagine 2258 carries an N-linked (GlcNAc...) asparagine glycan. One copy of the YD 23 repeat lies at 2269–2310; it reads YDLQGHLFAMEISSGEEFYIACDNTGTPLAVFSSNGLLLKQV. N-linked (GlcNAc...) asparagine glycosylation is present at asparagine 2571.

The protein belongs to the tenascin family. Teneurin subfamily. As to quaternary structure, homodimer; disulfide-linked; to mediate homophilic cell adhesion. In terms of tissue distribution, expressed by retinal ganglion cells and their presynaptic amacrine and postsynaptic tectal cell targets.

It localises to the cell membrane. Its subcellular location is the cell projection. The protein localises to the axon. Its function is as follows. Involved in neural development by regulating the establishment of proper connectivity within the nervous system. Acts in both pre- and postsynaptic neurons in the hippocampus to control the assembly of a precise topographic projection: required in both CA1 and subicular neurons for the precise targeting of proximal CA1 axons to distal subiculum, probably by promoting homophilic cell adhesion. Required by retinal ganglion cells for acquisition of their correct morphological and functional connectivity, thereby playing a key role in the development of the visual pathway. The chain is Teneurin-3 (tenm3) from Danio rerio (Zebrafish).